Here is a 451-residue protein sequence, read N- to C-terminus: Bifunctional protein GlmU (451 aa).

The segment at 1–229 (MQRHAIVLAA…FEEIMGVNDR (229 aa)) is pyrophosphorylase. Residues 8–11 (LAAG), Lys-22, Gln-72, and 77–78 (GT) contribute to the UDP-N-acetyl-alpha-D-glucosamine site. Asp-102 contributes to the Mg(2+) binding site. The UDP-N-acetyl-alpha-D-glucosamine site is built by Gly-139, Glu-154, and Asn-227. Asn-227 contacts Mg(2+). The interval 230 to 250 (VMLSEAEKAFRKRINEQHMKN) is linker. The segment at 251–451 (GVTIIDPVTT…QTTKEGYLKK (201 aa)) is N-acetyltransferase. Residues Arg-332 and Lys-350 each coordinate UDP-N-acetyl-alpha-D-glucosamine. His-362 (proton acceptor) is an active-site residue. UDP-N-acetyl-alpha-D-glucosamine-binding residues include Tyr-365 and Asn-376. Acetyl-CoA is bound by residues 385–386 (NY), Ala-422, and Arg-439.

This sequence in the N-terminal section; belongs to the N-acetylglucosamine-1-phosphate uridyltransferase family. In the C-terminal section; belongs to the transferase hexapeptide repeat family. In terms of assembly, homotrimer. Mg(2+) serves as cofactor.

It localises to the cytoplasm. It carries out the reaction alpha-D-glucosamine 1-phosphate + acetyl-CoA = N-acetyl-alpha-D-glucosamine 1-phosphate + CoA + H(+). The catalysed reaction is N-acetyl-alpha-D-glucosamine 1-phosphate + UTP + H(+) = UDP-N-acetyl-alpha-D-glucosamine + diphosphate. Its pathway is nucleotide-sugar biosynthesis; UDP-N-acetyl-alpha-D-glucosamine biosynthesis; N-acetyl-alpha-D-glucosamine 1-phosphate from alpha-D-glucosamine 6-phosphate (route II): step 2/2. It participates in nucleotide-sugar biosynthesis; UDP-N-acetyl-alpha-D-glucosamine biosynthesis; UDP-N-acetyl-alpha-D-glucosamine from N-acetyl-alpha-D-glucosamine 1-phosphate: step 1/1. The protein operates within bacterial outer membrane biogenesis; LPS lipid A biosynthesis. In terms of biological role, catalyzes the last two sequential reactions in the de novo biosynthetic pathway for UDP-N-acetylglucosamine (UDP-GlcNAc). The C-terminal domain catalyzes the transfer of acetyl group from acetyl coenzyme A to glucosamine-1-phosphate (GlcN-1-P) to produce N-acetylglucosamine-1-phosphate (GlcNAc-1-P), which is converted into UDP-GlcNAc by the transfer of uridine 5-monophosphate (from uridine 5-triphosphate), a reaction catalyzed by the N-terminal domain. This Staphylococcus saprophyticus subsp. saprophyticus (strain ATCC 15305 / DSM 20229 / NCIMB 8711 / NCTC 7292 / S-41) protein is Bifunctional protein GlmU.